The chain runs to 70 residues: DNA gyrase inhibitor YacG (70 aa).

Residues Cys-9, Cys-12, Cys-28, and Cys-32 each coordinate Zn(2+). Residues 43 to 70 (ESRKIPGSSIDPESIVTSNNKQDNEDEQ) are disordered.

Belongs to the DNA gyrase inhibitor YacG family. In terms of assembly, interacts with GyrB. The cofactor is Zn(2+).

Its function is as follows. Inhibits all the catalytic activities of DNA gyrase by preventing its interaction with DNA. Acts by binding directly to the C-terminal domain of GyrB, which probably disrupts DNA binding by the gyrase. This chain is DNA gyrase inhibitor YacG, found in Legionella pneumophila (strain Paris).